Here is a 362-residue protein sequence, read N- to C-terminus: RING finger protein 32 (362 aa).

The RING-type 1; atypical zinc-finger motif lies at 127 to 169; it reads CPICKEEFELRPQVLLSCSHVFHKACLQAFEKFTNKKTCPLCR. Residues 186–215 enclose the IQ domain; sequence RIKCVTRIQAYWRGCVVRKWYRNLRKTVPP. The segment at 293-352 adopts an RING-type 2; atypical zinc-finger fold; that stretch reads CSICLAPLSAAGGQRVGAGRRSREMALLSCSHVFHHACLLALEEFSVGDRPPFHACPLCR.

As to expression, highly expressed in testis, less abundant in ovary.

The protein resides in the cytoplasm. Its function is as follows. May play a role in sperm formation. In Homo sapiens (Human), this protein is RING finger protein 32 (RNF32).